Reading from the N-terminus, the 355-residue chain is Glutamine synthetase root isozyme 4 (355 aa).

Positions 19 to 99 constitute a GS beta-grasp domain; it reads IIAEYIWIGG…VMCDCYTPAG (81 aa). Residues 37–66 form a disordered region; that stretch reads ARTLPGPVTDPSKLPKWNYDGSSTGQAPGE. Residues 106-355 enclose the GS catalytic domain; the sequence is KRYSAAKIFS…IAETTIVWKP (250 aa).

It belongs to the glutamine synthetase family. As to quaternary structure, homooctamer. In terms of tissue distribution, found in all the tissues examined with higher expression found in tissues of the root, stem and seedling shoot.

The protein resides in the cytoplasm. The catalysed reaction is L-glutamate + NH4(+) + ATP = L-glutamine + ADP + phosphate + H(+). In terms of biological role, plays a role in the flow of nitrogen into nitrogenous organic compounds. This is Glutamine synthetase root isozyme 4 (GLN5) from Zea mays (Maize).